The chain runs to 318 residues: Ankyrin repeat domain-containing protein 1 (318 aa).

The stretch at A37–R77 forms a coiled coil. ANK repeat units follow at residues V118 to T147, Y151 to F180, L184 to A213, L217 to A246, E250 to I279, and A283 to H314.

It is found in the nucleus. May act as a nuclear transcription factor that negatively regulates the expression of cardiac genes. The protein is Ankyrin repeat domain-containing protein 1 (ankrd1) of Xenopus tropicalis (Western clawed frog).